The primary structure comprises 76 residues: Large ribosomal subunit protein eL20 (76 aa).

It belongs to the eukaryotic ribosomal protein eL20 family. As to quaternary structure, part of the 50S ribosomal subunit. Binds 23S rRNA.

This is Large ribosomal subunit protein eL20 from Methanococcus maripaludis (strain C7 / ATCC BAA-1331).